Consider the following 549-residue polypeptide: Cytochrome c oxidase subunit 1 (549 aa).

The chain crosses the membrane as a helical span at residues 18–38; sequence LCYLLVAILSGFVGYVYSLFI. Residues Glu-41 and Gly-46 each coordinate Ca(2+). Residues 42 to 62 form a helical membrane-spanning segment; sequence LSLIGCGILFGDYQFYNVLIT. His-64 contributes to the Fe(II)-heme a binding site. 5 consecutive transmembrane segments (helical) span residues 66–86, 100–120, 148–168, 186–206, and 222–242; these read LIMVFAFIMPVMMGGLVNYFI, LNNMSFWMYLAGFGCVVNGFL, FVMFAVHLLGISSILNSINLL, LFIWAALITAILLIITLPVLA, and FYDVVGGGDLILFQHIFWFFG. His-243 is a binding site for Cu cation. Residues 243–247 constitute a cross-link (1'-histidyl-3'-tyrosine (His-Tyr)); it reads HPEVY. The next 2 membrane-spanning stretches (helical) occupy residues 246-266 and 269-289; these read VYIILLPVFGLISTIVEVIGF and VFSTVAMIYSMILIAILGMFV. Tyr-247 is a binding site for O2. Cu cation-binding residues include His-292 and His-293. The next 2 helical transmembrane spans lie at 306–326 and 340–360; these read YFGGVSILIGLPTCVKLFNWI and VYFVIMFIFMFLIGAVTGLFL. Mg(2+)-binding residues include His-370 and Asp-371. Heme a3 is bound at residue His-378. 5 consecutive transmembrane segments (helical) span residues 379–399, 402–422, 460–480, 484–504, and 520–540; these read FHYVLSLGAVVGFFTGFIHFL, WLPIELYLFWMFYFISTLFIG, MLLLASLILFLCALFCVFLFW, LFFVSLFVFSLYCFFYFSTWL, and IVLDYLFLILCFCFVFFIFFW. His-380 serves as a coordination point for Fe(II)-heme a.

It belongs to the heme-copper respiratory oxidase family. In terms of assembly, component of the cytochrome c oxidase (complex IV, CIV), a multisubunit enzyme composed of a catalytic core of 3 subunits and several supernumerary subunits. The complex exists as a monomer or a dimer and forms supercomplexes (SCs) in the inner mitochondrial membrane with ubiquinol-cytochrome c oxidoreductase (cytochrome b-c1 complex, complex III, CIII). It depends on heme as a cofactor. Requires Cu cation as cofactor.

Its subcellular location is the mitochondrion inner membrane. It catalyses the reaction 4 Fe(II)-[cytochrome c] + O2 + 8 H(+)(in) = 4 Fe(III)-[cytochrome c] + 2 H2O + 4 H(+)(out). Its pathway is energy metabolism; oxidative phosphorylation. Functionally, component of the cytochrome c oxidase, the last enzyme in the mitochondrial electron transport chain which drives oxidative phosphorylation. The respiratory chain contains 3 multisubunit complexes succinate dehydrogenase (complex II, CII), ubiquinol-cytochrome c oxidoreductase (cytochrome b-c1 complex, complex III, CIII) and cytochrome c oxidase (complex IV, CIV), that cooperate to transfer electrons derived from NADH and succinate to molecular oxygen, creating an electrochemical gradient over the inner membrane that drives transmembrane transport and the ATP synthase. Cytochrome c oxidase is the component of the respiratory chain that catalyzes the reduction of oxygen to water. Electrons originating from reduced cytochrome c in the intermembrane space (IMS) are transferred via the dinuclear copper A center (CU(A)) of subunit 2 and heme A of subunit 1 to the active site in subunit 1, a binuclear center (BNC) formed by heme A3 and copper B (CU(B)). The BNC reduces molecular oxygen to 2 water molecules using 4 electrons from cytochrome c in the IMS and 4 protons from the mitochondrial matrix. The chain is Cytochrome c oxidase subunit 1 (COI) from Leishmania tarentolae (Sauroleishmania tarentolae).